The chain runs to 109 residues: Period circadian protein (109 aa).

The segment at 59–109 is disordered; the sequence is CFEGSGGSGSSGNFTSGSNLNMRSVTNTSNTGTGTSSESVPLVTLTEALIS. A compositionally biased stretch (low complexity) spans 69–98; it reads SGNFTSGSNLNMRSVTNTSNTGTGTSSESV.

In terms of assembly, forms a heterodimer with timeless (TIM); the complex then translocates into the nucleus. Post-translationally, phosphorylated with a circadian rhythmicity, probably by the double-time protein (dbt). Phosphorylation could be implicated in the stability of per monomer and in the formation of heterodimer per-tim.

Its subcellular location is the nucleus. It localises to the cytoplasm. It is found in the perinuclear region. Essential for biological clock functions. Determines the period length of circadian and ultradian rhythms; an increase in PER dosage leads to shortened circadian rhythms and a decrease leads to lengthened circadian rhythms. Essential for the circadian rhythmicity of locomotor activity, eclosion behavior, and for the rhythmic component of the male courtship song that originates in the thoracic nervous system. The biological cycle depends on the rhythmic formation and nuclear localization of the TIM-PER complex. Light induces the degradation of TIM, which promotes elimination of PER. Nuclear activity of the heterodimer coordinatively regulates PER and TIM transcription through a negative feedback loop. Behaves as a negative element in circadian transcriptional loop. Does not appear to bind DNA, suggesting indirect transcriptional inhibition. This Syritta pipiens (Hoverfly) protein is Period circadian protein (per).